A 1651-amino-acid chain; its full sequence is Roundabout homolog 1 (1651 aa).

The N-terminal stretch at methionine 1–alanine 25 is a signal peptide. Over glutamine 26–proline 897 the chain is Extracellular. Residues proline 31–phenylalanine 66 form a disordered region. Over residues aspartate 39–tyrosine 56 the composition is skewed to polar residues. Ig-like C2-type domains are found at residues proline 68–glutamate 164, aspartate 170–threonine 257, proline 262–threonine 346, proline 351–threonine 446, and proline 455–glutamate 541. A disulfide bridge links cysteine 89 with cysteine 147. Asparagine 160 is a glycosylation site (N-linked (GlcNAc...) asparagine). 3 disulfide bridges follow: cysteine 191/cysteine 240, cysteine 283/cysteine 330, and cysteine 372/cysteine 428. The N-linked (GlcNAc...) asparagine glycan is linked to asparagine 463. A disulfide bond links cysteine 476 and cysteine 525. Fibronectin type-III domains are found at residues alanine 563–valine 657, valine 676–glutamate 773, and proline 778–histidine 874. 3 N-linked (GlcNAc...) asparagine glycosylation sites follow: asparagine 790, asparagine 820, and asparagine 827. The helical transmembrane segment at alanine 898–leucine 918 threads the bilayer. Over tyrosine 919–serine 1651 the chain is Cytoplasmic. A Phosphoserine modification is found at serine 940. Position 948 is a phosphothreonine (threonine 948). Tyrosine 1038 carries the post-translational modification Phosphotyrosine. Position 1055 is a phosphoserine (serine 1055). Phosphotyrosine is present on tyrosine 1073. Residues asparagine 1086–glutamine 1107 are disordered. Position 1114 is a phosphotyrosine (tyrosine 1114). Disordered stretches follow at residues proline 1137–glutamate 1337, glutamate 1352–phenylalanine 1397, and arginine 1420–serine 1651. The span at glycine 1147 to glutamine 1163 shows a compositional bias: low complexity. The segment covering leucine 1186 to histidine 1196 has biased composition (pro residues). The residue at position 1240 (threonine 1240) is a Phosphothreonine. The span at tyrosine 1255 to glutamate 1269 shows a compositional bias: polar residues. Residues aspartate 1281–arginine 1293 show a composition bias toward basic and acidic residues. Residues valine 1296–proline 1307 show a composition bias toward pro residues. Position 1297 is a phosphoserine (serine 1297). Residues methionine 1322–methionine 1336 are compositionally biased toward acidic residues. Residues serine 1384–phenylalanine 1397 show a composition bias toward low complexity. Residues proline 1438 to serine 1451 show a composition bias toward polar residues. The span at arginine 1459–histidine 1470 shows a compositional bias: basic residues. Residues leucine 1480–isoleucine 1490 show a composition bias toward pro residues. Composition is skewed to basic and acidic residues over residues alanine 1516–threonine 1541 and aspartate 1549–proline 1573. The segment covering phenylalanine 1592–proline 1601 has biased composition (polar residues). Positions serine 1602–serine 1614 are enriched in low complexity. A compositionally biased stretch (acidic residues) spans asparagine 1642 to serine 1651.

It belongs to the immunoglobulin superfamily. ROBO family. As to quaternary structure, homodimer. Dimerization is mediated by the extracellular domain and is independent of SLIT liganding. Interacts with SLIT1. Interacts with SLIT2. Interacts with FLRT3. Interacts with MYO9B (via Rho-GAP domain). Ubiquitinated. May be deubiquitinated by USP33. In terms of tissue distribution, expressed in embryonal brain and spinal cord.

Its subcellular location is the cell membrane. It localises to the cell projection. The protein localises to the axon. The protein resides in the endoplasmic reticulum-Golgi intermediate compartment membrane. In terms of biological role, receptor for SLIT1 and SLIT2 that mediates cellular responses to molecular guidance cues in cellular migration, including axonal navigation at the ventral midline of the neural tube and projection of axons to different regions during neuronal development. Interaction with the intracellular domain of FLRT3 mediates axon attraction towards cells expressing NTN1. In axon growth cones, the silencing of the attractive effect of NTN1 by SLIT2 may require the formation of a ROBO1-DCC complex. Plays a role in the regulation of cell migration via its interaction with MYO9B; inhibits MYO9B-mediated stimulation of RHOA GTPase activity, and thereby leads to increased levels of active, GTP-bound RHOA. May be required for lung development. This chain is Roundabout homolog 1 (Robo1), found in Rattus norvegicus (Rat).